A 168-amino-acid chain; its full sequence is Sec-independent protein translocase protein TatB (168 aa).

Residues methionine 1–glycine 21 traverse the membrane as a helical segment. Disordered stretches follow at residues phenylalanine 92–arginine 132 and valine 146–glutamate 168. A compositionally biased stretch (low complexity) spans glycine 94 to glycine 107. Positions lysine 117–arginine 126 are enriched in basic residues.

This sequence belongs to the TatB family. The Tat system comprises two distinct complexes: a TatABC complex, containing multiple copies of TatA, TatB and TatC subunits, and a separate TatA complex, containing only TatA subunits. Substrates initially bind to the TatABC complex, which probably triggers association of the separate TatA complex to form the active translocon.

It localises to the cell inner membrane. Its function is as follows. Part of the twin-arginine translocation (Tat) system that transports large folded proteins containing a characteristic twin-arginine motif in their signal peptide across membranes. Together with TatC, TatB is part of a receptor directly interacting with Tat signal peptides. TatB may form an oligomeric binding site that transiently accommodates folded Tat precursor proteins before their translocation. The sequence is that of Sec-independent protein translocase protein TatB from Cupriavidus metallidurans (strain ATCC 43123 / DSM 2839 / NBRC 102507 / CH34) (Ralstonia metallidurans).